Consider the following 284-residue polypeptide: Pantothenate synthetase (284 aa).

30–37 (MGNLHDGH) is a binding site for ATP. H37 acts as the Proton donor in catalysis. Q61 provides a ligand contact to (R)-pantoate. Q61 is a binding site for beta-alanine. Position 149 to 152 (149 to 152 (GEKD)) interacts with ATP. Q155 is a (R)-pantoate binding site. ATP is bound by residues V178 and 186–189 (LSSR).

This sequence belongs to the pantothenate synthetase family. In terms of assembly, homodimer.

The protein localises to the cytoplasm. The catalysed reaction is (R)-pantoate + beta-alanine + ATP = (R)-pantothenate + AMP + diphosphate + H(+). Its pathway is cofactor biosynthesis; (R)-pantothenate biosynthesis; (R)-pantothenate from (R)-pantoate and beta-alanine: step 1/1. Functionally, catalyzes the condensation of pantoate with beta-alanine in an ATP-dependent reaction via a pantoyl-adenylate intermediate. This is Pantothenate synthetase from Cronobacter sakazakii (strain ATCC BAA-894) (Enterobacter sakazakii).